The following is a 432-amino-acid chain: Adenylosuccinate synthetase 1 (432 aa).

Residues 12–18 (GDEGKGR) and 40–42 (GHT) contribute to the GTP site. The Proton acceptor role is filled by D13. Positions 13 and 40 each coordinate Mg(2+). Residues 13 to 16 (DEGK), 38 to 41 (NAGH), T128, R142, Q222, T237, and R301 contribute to the IMP site. H41 acts as the Proton donor in catalysis. Residue 297 to 303 (TNTGRPR) participates in substrate binding. Residues R303, 329-331 (KLD), and 411-413 (STG) contribute to the GTP site.

This sequence belongs to the adenylosuccinate synthetase family. In terms of assembly, homodimer. Mg(2+) is required as a cofactor.

It is found in the cytoplasm. It catalyses the reaction IMP + L-aspartate + GTP = N(6)-(1,2-dicarboxyethyl)-AMP + GDP + phosphate + 2 H(+). It functions in the pathway purine metabolism; AMP biosynthesis via de novo pathway; AMP from IMP: step 1/2. Its function is as follows. Plays an important role in the de novo pathway of purine nucleotide biosynthesis. Catalyzes the first committed step in the biosynthesis of AMP from IMP. This Chromobacterium violaceum (strain ATCC 12472 / DSM 30191 / JCM 1249 / CCUG 213 / NBRC 12614 / NCIMB 9131 / NCTC 9757 / MK) protein is Adenylosuccinate synthetase 1.